The chain runs to 460 residues: ATP synthase subunit beta (460 aa).

150–157 (GGAGVGKT) serves as a coordination point for ATP.

It belongs to the ATPase alpha/beta chains family. In terms of assembly, F-type ATPases have 2 components, CF(1) - the catalytic core - and CF(0) - the membrane proton channel. CF(1) has five subunits: alpha(3), beta(3), gamma(1), delta(1), epsilon(1). CF(0) has three main subunits: a(1), b(2) and c(9-12). The alpha and beta chains form an alternating ring which encloses part of the gamma chain. CF(1) is attached to CF(0) by a central stalk formed by the gamma and epsilon chains, while a peripheral stalk is formed by the delta and b chains.

It is found in the cell inner membrane. It catalyses the reaction ATP + H2O + 4 H(+)(in) = ADP + phosphate + 5 H(+)(out). Functionally, produces ATP from ADP in the presence of a proton gradient across the membrane. The catalytic sites are hosted primarily by the beta subunits. The sequence is that of ATP synthase subunit beta from Salmonella paratyphi A (strain ATCC 9150 / SARB42).